The chain runs to 283 residues: Formamidopyrimidine-DNA glycosylase (283 aa).

The Schiff-base intermediate with DNA role is filled by P2. E3 (proton donor) is an active-site residue. Catalysis depends on K58, which acts as the Proton donor; for beta-elimination activity. Positions 100, 119, and 162 each coordinate DNA. Residues 247–283 (RVYGREGQPCVTPGCRGLVGRIVQSGRSSFHCPECQR) form an FPG-type zinc finger. The Proton donor; for delta-elimination activity role is filled by R273.

Belongs to the FPG family. As to quaternary structure, monomer. Zn(2+) is required as a cofactor.

It catalyses the reaction Hydrolysis of DNA containing ring-opened 7-methylguanine residues, releasing 2,6-diamino-4-hydroxy-5-(N-methyl)formamidopyrimidine.. The catalysed reaction is 2'-deoxyribonucleotide-(2'-deoxyribose 5'-phosphate)-2'-deoxyribonucleotide-DNA = a 3'-end 2'-deoxyribonucleotide-(2,3-dehydro-2,3-deoxyribose 5'-phosphate)-DNA + a 5'-end 5'-phospho-2'-deoxyribonucleoside-DNA + H(+). Involved in base excision repair of DNA damaged by oxidation or by mutagenic agents. Acts as a DNA glycosylase that recognizes and removes damaged bases. Has a preference for oxidized purines, such as 7,8-dihydro-8-oxoguanine (8-oxoG). Has AP (apurinic/apyrimidinic) lyase activity and introduces nicks in the DNA strand. Cleaves the DNA backbone by beta-delta elimination to generate a single-strand break at the site of the removed base with both 3'- and 5'-phosphates. This Cereibacter sphaeroides (strain ATCC 17025 / ATH 2.4.3) (Rhodobacter sphaeroides) protein is Formamidopyrimidine-DNA glycosylase.